The sequence spans 154 residues: Endoribonuclease YbeY (154 aa).

The Zn(2+) site is built by His114, His118, and His124.

The protein belongs to the endoribonuclease YbeY family. The cofactor is Zn(2+).

The protein localises to the cytoplasm. Single strand-specific metallo-endoribonuclease involved in late-stage 70S ribosome quality control and in maturation of the 3' terminus of the 16S rRNA. The protein is Endoribonuclease YbeY of Aggregatibacter actinomycetemcomitans (Actinobacillus actinomycetemcomitans).